A 499-amino-acid polypeptide reads, in one-letter code: Ethanolamine-phosphate phospho-lyase (499 aa).

An N6-(pyridoxal phosphate)lysine modification is found at K278. Residues 468 to 479 show a composition bias toward basic and acidic residues; the sequence is RDSTTDSKENPS. Positions 468 to 499 are disordered; it reads RDSTTDSKENPSRKRNGMCTDTHSLLSKRLKT.

It belongs to the class-III pyridoxal-phosphate-dependent aminotransferase family. As to quaternary structure, homotetramer. Requires pyridoxal 5'-phosphate as cofactor.

It is found in the mitochondrion. The enzyme catalyses phosphoethanolamine + H2O = acetaldehyde + NH4(+) + phosphate. In terms of biological role, catalyzes the pyridoxal-phosphate-dependent breakdown of phosphoethanolamine, converting it to ammonia, inorganic phosphate and acetaldehyde. The sequence is that of Ethanolamine-phosphate phospho-lyase (ETNPPL) from Homo sapiens (Human).